Reading from the N-terminus, the 1253-residue chain is Pleckstrin homology-like domain family B member 2 (1253 aa).

Basic and acidic residues predominate over residues 1-12; the sequence is MEEHSYIQKELD. Disordered regions lie at residues 1-43, 60-159, and 187-212; these read MEEH…PKKY, LTLS…KSHD, and DAGP…RKMS. Positions 29–43 are enriched in polar residues; the sequence is NDSQNMMESLSPKKY. Residues Ser71 and Ser73 each carry the phosphoserine modification. The span at 74–96 shows a compositional bias: polar residues; that stretch reads PLGTSVRSSPSLAKIQGSKQFSY. Positions 126-144 are enriched in basic and acidic residues; sequence ADFDHYTGRDSERALRLSE. Phosphoserine is present on residues Ser157, Ser204, Ser212, Ser242, and Ser245. A disordered region spans residues 265-286; it reads NQLTPLSLPPRNSLGNSKRTKL. Phosphoserine is present on residues Ser330, Ser334, Ser348, Ser351, Ser384, Ser387, Ser415, Ser420, Ser468, Ser489, and Ser501. Thr504 is modified (phosphothreonine). The residue at position 513 (Ser513) is a Phosphoserine. The segment at 525–567 is disordered; that stretch reads LSQSSASFFTPRSTRNDELLSDLTRTPPPPSSTFPKASSESSY. A phosphothreonine mark is found at Thr550 and Thr574. Coiled-coil stretches lie at residues 584-696 and 722-807; these read SQEL…LDNC and FEDL…LCNL. Residue Thr898 is modified to Phosphothreonine. A coiled-coil region spans residues 1032–1098; sequence IARIEEMERL…QKLIEKEVKI (67 aa). The 104-residue stretch at 1143-1246 folds into the PH domain; that stretch reads EKTCRGFLIK…WMDVIVTGAE (104 aa).

Interacts with FLNC. Interacts with AMOTL2; interaction may facilitate PHLDB2 localization to the myotube podosome cortex that surrounds the core. Part of a cortical microtubule stabilization complex (CMSC) composed of KANK1, PPFIA1, PPFIBP1, ERC1/ELKS, PHLDB2/LL5beta, CLASPs, KIF21A and possibly additional interactors; within CMSCs KANK1 and PHLDB2/LL5beta appear to be the core components for targeting of microtubule-binding proteins KIF21A and CLASPs, whereas PPFIA1, PPFIBP1 and ERC1/ELKS serve as scaffolds for protein clustering.

It is found in the cytoplasm. It localises to the cell cortex. The protein localises to the membrane. Its subcellular location is the cell projection. The protein resides in the podosome. Functionally, seems to be involved in the assembly of the postsynaptic apparatus. May play a role in acetyl-choline receptor (AChR) aggregation in the postsynaptic membrane. The protein is Pleckstrin homology-like domain family B member 2 (PHLDB2) of Homo sapiens (Human).